A 549-amino-acid polypeptide reads, in one-letter code: Glucose-6-phosphate isomerase (549 aa).

Glu353 (proton donor) is an active-site residue. Active-site residues include His384 and Lys512.

It belongs to the GPI family.

It localises to the cytoplasm. The enzyme catalyses alpha-D-glucose 6-phosphate = beta-D-fructose 6-phosphate. It participates in carbohydrate biosynthesis; gluconeogenesis. It functions in the pathway carbohydrate degradation; glycolysis; D-glyceraldehyde 3-phosphate and glycerone phosphate from D-glucose: step 2/4. In terms of biological role, catalyzes the reversible isomerization of glucose-6-phosphate to fructose-6-phosphate. In Alteromonas mediterranea (strain DSM 17117 / CIP 110805 / LMG 28347 / Deep ecotype), this protein is Glucose-6-phosphate isomerase.